Consider the following 94-residue polypeptide: Large ribosomal subunit protein uL22 (94 aa).

This sequence belongs to the universal ribosomal protein uL22 family. In terms of assembly, part of the 50S ribosomal subunit.

Functionally, this protein binds specifically to 23S rRNA; its binding is stimulated by other ribosomal proteins, e.g. L4, L17, and L20. It is important during the early stages of 50S assembly. It makes multiple contacts with different domains of the 23S rRNA in the assembled 50S subunit and ribosome. Its function is as follows. The globular domain of the protein is located near the polypeptide exit tunnel on the outside of the subunit, while an extended beta-hairpin is found that lines the wall of the exit tunnel in the center of the 70S ribosome. In Tomato big bud phytoplasma, this protein is Large ribosomal subunit protein uL22 (rplV).